The primary structure comprises 276 residues: Omega-amidase NIT2 (276 aa).

In terms of domain architecture, CN hydrolase spans 4–248 (FRLALIQLQI…EAIVYSDIDL (245 aa)). A Phosphoserine modification is found at Ser-26. Catalysis depends on Glu-43, which acts as the Proton acceptor. An N6-acetyllysine; alternate modification is found at Lys-68. Lys-68 carries the N6-succinyllysine; alternate modification. The Proton donor role is filled by Lys-112. 2 positions are modified to N6-succinyllysine: Lys-123 and Lys-130. Residue Cys-153 is the Nucleophile of the active site.

In terms of assembly, homodimer. In terms of tissue distribution, detected in fetal brain (at protein level). Ubiquitous. Detected in heart, brain, placenta, lung, liver, skeletal muscle, kidney, pancreas, prostate, spleen, thymus, prostate, testis, ovary, small intestine and colon.

It localises to the cytoplasm. It carries out the reaction a monoamide of a dicarboxylate + H2O = a dicarboxylate + NH4(+). It catalyses the reaction 2-oxoglutaramate + H2O = 2-oxoglutarate + NH4(+). The enzyme catalyses 2-oxosuccinamate + H2O = oxaloacetate + NH4(+). Has omega-amidase activity. The role of omega-amidase is to remove potentially toxic intermediates by converting 2-oxoglutaramate and 2-oxosuccinamate to biologically useful 2-oxoglutarate and oxaloacetate, respectively. The sequence is that of Omega-amidase NIT2 (NIT2) from Homo sapiens (Human).